Here is a 550-residue protein sequence, read N- to C-terminus: Protein UshA (550 aa).

Residues 1 to 25 (MRFSLSTTAAALAVSLAFAPGWAVA) form the signal peptide. Positions 41, 43, 84, 116, 217, 252, and 254 each coordinate a divalent metal cation. Cys258 and Cys275 are oxidised to a cystine. Substrate-binding positions include 375-379 (RSKVR) and 498-504 (FNALGGD).

Belongs to the 5'-nucleotidase family. Requires Co(2+) as cofactor.

Its subcellular location is the periplasm. The catalysed reaction is UDP-sugar + H2O = UMP + alpha-D-aldose 1-phosphate.. It catalyses the reaction a ribonucleoside 5'-phosphate + H2O = a ribonucleoside + phosphate. Degradation of external UDP-glucose to uridine monophosphate and glucose-1-phosphate, which can then be used by the cell. This is Protein UshA (ushA) from Yersinia enterocolitica serotype O:8 / biotype 1B (strain NCTC 13174 / 8081).